Consider the following 487-residue polypeptide: Glutamate--tRNA ligase 2 (487 aa).

The 'HIGH' region signature appears at 24–34; that stretch reads PSPTGFLHIGG. The 'KMSKS' region signature appears at 258–262; it reads KLSKR. Position 261 (lysine 261) interacts with ATP.

This sequence belongs to the class-I aminoacyl-tRNA synthetase family. Glutamate--tRNA ligase type 1 subfamily. In terms of assembly, monomer.

It localises to the cytoplasm. The catalysed reaction is tRNA(Glu) + L-glutamate + ATP = L-glutamyl-tRNA(Glu) + AMP + diphosphate. In terms of biological role, catalyzes the attachment of glutamate to tRNA(Glu) in a two-step reaction: glutamate is first activated by ATP to form Glu-AMP and then transferred to the acceptor end of tRNA(Glu). The chain is Glutamate--tRNA ligase 2 from Novosphingobium aromaticivorans (strain ATCC 700278 / DSM 12444 / CCUG 56034 / CIP 105152 / NBRC 16084 / F199).